A 485-amino-acid chain; its full sequence is Sulfate adenylyltransferase subunit 1 (485 aa).

One can recognise a tr-type G domain in the interval 17–232 (KDLLRLLTAG…LETVHIDNDH (216 aa)). Positions 26 to 33 (GSVDDGKS) are G1. A GTP-binding site is contributed by 26 to 33 (GSVDDGKS). The interval 84–88 (GITID) is G2. A G3 region spans residues 105–108 (DTPG). GTP is bound by residues 105–109 (DTPGH) and 160–163 (NKMD). A G4 region spans residues 160-163 (NKMD). Positions 197-199 (SAL) are G5.

This sequence belongs to the TRAFAC class translation factor GTPase superfamily. Classic translation factor GTPase family. CysN/NodQ subfamily. In terms of assembly, heterodimer composed of CysD, the smaller subunit, and CysN.

It carries out the reaction sulfate + ATP + H(+) = adenosine 5'-phosphosulfate + diphosphate. The protein operates within sulfur metabolism; hydrogen sulfide biosynthesis; sulfite from sulfate: step 1/3. Functionally, with CysD forms the ATP sulfurylase (ATPS) that catalyzes the adenylation of sulfate producing adenosine 5'-phosphosulfate (APS) and diphosphate, the first enzymatic step in sulfur assimilation pathway. APS synthesis involves the formation of a high-energy phosphoric-sulfuric acid anhydride bond driven by GTP hydrolysis by CysN coupled to ATP hydrolysis by CysD. The polypeptide is Sulfate adenylyltransferase subunit 1 (Bacteroides thetaiotaomicron (strain ATCC 29148 / DSM 2079 / JCM 5827 / CCUG 10774 / NCTC 10582 / VPI-5482 / E50)).